A 156-amino-acid chain; its full sequence is Large ribosomal subunit protein uL22c (156 aa).

Belongs to the universal ribosomal protein uL22 family. Part of the 50S ribosomal subunit.

Its subcellular location is the plastid. The protein resides in the chloroplast. Functionally, this protein binds specifically to 23S rRNA. In terms of biological role, the globular domain of the protein is located near the polypeptide exit tunnel on the outside of the subunit, while an extended beta-hairpin is found that lines the wall of the exit tunnel in the center of the 70S ribosome. The protein is Large ribosomal subunit protein uL22c (rpl22) of Buxus microphylla (Littleleaf boxwood).